Reading from the N-terminus, the 79-residue chain is MNEIRVTQTLDTLGLRCPEPVMLVRKHIRFLEEGDVLLVIADDPATTRDIPSFCQFMEHTLLKSEIEHIPFQYWVKKGK.

Cysteine 17 acts as the Cysteine persulfide intermediate in catalysis.

The protein belongs to the sulfur carrier protein TusA family.

It is found in the cytoplasm. Sulfur carrier protein which probably makes part of a sulfur-relay system. This Pasteurella multocida (strain Pm70) protein is Sulfur carrier protein TusA.